Here is a 723-residue protein sequence, read N- to C-terminus: Host cell factor 2 (723 aa).

Kelch repeat units lie at residues L34–C79, R83–H130, K207–N255, and M257–E305. Fibronectin type-III domains are found at residues P357 to T436, T516 to P606, and F608 to A720. The disordered stretch occupies residues A398–N472. Residues Q419–A433 show a composition bias toward polar residues.

As to quaternary structure, binds KMT2A/MLL1. Component of the MLL1/MLL complex, at least composed of KMT2A/MLL1, ASH2L, RBBP5, DPY30, WDR5, MEN1, HCFC1 and HCFC2. Interacts with TASOR.

The protein localises to the cytoplasm. The protein resides in the nucleus. The sequence is that of Host cell factor 2 (Hcfc2) from Rattus norvegicus (Rat).